A 122-amino-acid polypeptide reads, in one-letter code: Large ribosomal subunit protein uL14 (122 aa).

It belongs to the universal ribosomal protein uL14 family. Part of the 50S ribosomal subunit. Forms a cluster with proteins L3 and L19. In the 70S ribosome, L14 and L19 interact and together make contacts with the 16S rRNA in bridges B5 and B8.

Binds to 23S rRNA. Forms part of two intersubunit bridges in the 70S ribosome. The polypeptide is Large ribosomal subunit protein uL14 (Paramagnetospirillum magneticum (strain ATCC 700264 / AMB-1) (Magnetospirillum magneticum)).